The primary structure comprises 433 residues: KICSTOR complex protein ITFG2 (433 aa).

One copy of the FG-GAP 1; atypical repeat lies at 19–48 (FPHAICLGDVDNDTLNELVVGDTSGKVSVY). Position 104 is a phosphoserine (Ser104). The FG-GAP 2; atypical repeat unit spans residues 126–155 (NTKVMLISDIDGDGCRELVVGYTDRVVRAF). Ser220 is modified (phosphoserine).

In terms of assembly, part of the KICSTOR complex composed of KPTN, ITFG2, KICS2 and SZT2. SZT2 probably serves as a link between the other three proteins in the KICSTOR complex and may mediate the direct interaction with the GATOR complex via GATOR1. The KICSTOR complex interacts directly with the GATOR1 complex and most probably indirectly with the GATOR2 complex in an amino acid-independent manner.

The protein localises to the lysosome membrane. In terms of biological role, as part of the KICSTOR complex functions in the amino acid-sensing branch of the TORC1 signaling pathway. Recruits, in an amino acid-independent manner, the GATOR1 complex to the lysosomal membranes and allows its interaction with GATOR2 and the RAG GTPases. Functions upstream of the RAG GTPases and is required to negatively regulate mTORC1 signaling in absence of amino acids. In absence of the KICSTOR complex mTORC1 is constitutively localized to the lysosome and activated. The KICSTOR complex is also probably involved in the regulation of mTORC1 by glucose. The polypeptide is KICSTOR complex protein ITFG2 (Pongo abelii (Sumatran orangutan)).